We begin with the raw amino-acid sequence, 444 residues long: Endothelin-3 receptor (444 aa).

An N-terminal signal peptide occupies residues 1 to 18; that stretch reads MATVILFVAWMACLMVGV. Residues 19-88 are Extracellular-facing; the sequence is CYQEFQTQQN…SRAKIRHAFK (70 aa). A glycan (N-linked (GlcNAc...) asparagine) is linked at N60. Residues 89 to 113 traverse the membrane as a helical segment; that stretch reads YVTTILSCVIFLVGIVGNSTLLRII. Over 114–124 the chain is Cytoplasmic; sequence YKNKCMRNGPN. A helical transmembrane segment spans residues 125–145; that stretch reads VLIASLALGDLFYILIAIPII. Residues 146-161 lie on the Extracellular side of the membrane; it reads SISFWLSTGHSEYIYQ. The chain crosses the membrane as a helical span at residues 162–180; that stretch reads LVHLYRARVYSLSLCALSI. Residues 181–201 are Cytoplasmic-facing; it reads DRYRAVASWNRIRSIGIPVRK. A helical membrane pass occupies residues 202-226; it reads AIELTLIWAVAIIVAVPEAIAFNLV. The Extracellular portion of the chain corresponds to 227–254; that stretch reads ELDFRGQTILVCMLPMEQTSDFMRFYQE. The chain crosses the membrane as a helical span at residues 255-279; sequence VKVWWLFGFYFCLPLACTGVFYTLM. At 280–307 the chain is on the cytoplasmic side; the sequence is SCEMLSIKNGMRIALNDHMKQRREVAKT. The chain crosses the membrane as a helical span at residues 308–328; sequence VFCLVVIFALCWLPLHVSSIF. The Extracellular portion of the chain corresponds to 329–365; that stretch reads VRLSATVKRACILKNKRSCIMAEIQTGVNYQLLMVMN. A helical transmembrane segment spans residues 366-386; that stretch reads YTGINMASLNSCIGPVALYFV. Topologically, residues 387 to 444 are cytoplasmic; sequence SRKFKNCFQSCLCCWCHRPTLTITPMDEKGSGGKWKANGHDLDLDRSSSRLSNKYSSS. The interval 416–444 is disordered; that stretch reads GSGGKWKANGHDLDLDRSSSRLSNKYSSS. Positions 424–434 are enriched in basic and acidic residues; that stretch reads NGHDLDLDRSS. Residues 435 to 444 are compositionally biased toward low complexity; sequence SRLSNKYSSS.

Belongs to the G-protein coupled receptor 1 family. Endothelin receptor subfamily.

It localises to the cell membrane. Functionally, receptor for endothelin-3. Mediates its action by association with G proteins that activate a phosphatidylinositol-calcium second messenger system. In Xenopus laevis (African clawed frog), this protein is Endothelin-3 receptor.